We begin with the raw amino-acid sequence, 695 residues long: Lysophospholipase 2 (695 aa).

Residues 1–19 (MQLSVLIASVLAAGAAVDA) form the signal peptide. Asn26, Asn72, Asn83, Asn115, Asn152, Asn171, Asn207, Asn269, Asn335, Asn379, Asn480, Asn504, Asn513, Asn532, Asn556, Asn573, Asn620, Asn626, Asn644, and Asn648 each carry an N-linked (GlcNAc...) asparagine glycan. The PLA2c domain maps to 28-577 (SCPDNANFIR…TNYCWNGTID (550 aa)). Positions 612–662 (NTGSGTKSNSSSKTNSTLVTSSRATSTGTLISNSSSNSTVSSTAARSSTSS) are disordered.

The protein belongs to the lysophospholipase family.

It is found in the secreted. The protein localises to the cell wall. It catalyses the reaction a 1-acyl-sn-glycero-3-phosphocholine + H2O = sn-glycerol 3-phosphocholine + a fatty acid + H(+). In terms of biological role, catalyzes the release of fatty acids from lysophospholipids. Phospholipase B may well contribute to pathogenicity by abetting the fungus in damaging and traversing host cell membranes, processes which likely increase the rapidity of disseminated infection. This chain is Lysophospholipase 2, found in Candida glabrata (strain ATCC 2001 / BCRC 20586 / JCM 3761 / NBRC 0622 / NRRL Y-65 / CBS 138) (Yeast).